Here is a 468-residue protein sequence, read N- to C-terminus: 6-phosphogluconate dehydrogenase, decarboxylating (468 aa).

NADP(+)-binding positions include 10 to 15 (GMAVMG), 33 to 35 (NRS), 74 to 76 (VKA), and Asn102. Substrate is bound by residues Asn102 and 128 to 130 (SGG). The Proton acceptor role is filled by Lys183. Residue 186–187 (HN) participates in substrate binding. Catalysis depends on Glu190, which acts as the Proton donor. The substrate site is built by Tyr191, Lys260, Arg287, Arg445, and His451.

This sequence belongs to the 6-phosphogluconate dehydrogenase family. Homodimer.

The enzyme catalyses 6-phospho-D-gluconate + NADP(+) = D-ribulose 5-phosphate + CO2 + NADPH. It functions in the pathway carbohydrate degradation; pentose phosphate pathway; D-ribulose 5-phosphate from D-glucose 6-phosphate (oxidative stage): step 3/3. Catalyzes the oxidative decarboxylation of 6-phosphogluconate to ribulose 5-phosphate and CO(2), with concomitant reduction of NADP to NADPH. This Shigella flexneri protein is 6-phosphogluconate dehydrogenase, decarboxylating (gnd).